The chain runs to 359 residues: Peptide chain release factor 1 (359 aa).

At glutamine 234 the chain carries N5-methylglutamine. The interval 283-305 (SQKDAARAADRRAQVGSGDRSER) is disordered.

It belongs to the prokaryotic/mitochondrial release factor family. Post-translationally, methylated by PrmC. Methylation increases the termination efficiency of RF1.

It localises to the cytoplasm. Functionally, peptide chain release factor 1 directs the termination of translation in response to the peptide chain termination codons UAG and UAA. The protein is Peptide chain release factor 1 of Methylobacterium sp. (strain 4-46).